A 329-amino-acid chain; its full sequence is uncharacterized protein (329 aa).

In terms of domain architecture, SIS spans 38-184 (IVKLILKSQE…MACLMRAKNF (147 aa)). Residue 56 to 61 (GVGKSA) participates in ATP binding. 2 consecutive CBS domains span residues 211-267 (QTTN…GLSL) and 276-329 (TLKP…GLKA).

It belongs to the SIS family. GutQ/KpsF subfamily.

This is an uncharacterized protein from Helicobacter pylori (strain J99 / ATCC 700824) (Campylobacter pylori J99).